The primary structure comprises 163 residues: MALNLQDKQAIVAEVNEAAKGALSAVIADSRGVTVEKMTELRKSAREAGVTMRVVRNTLLRRAVEGTDYECLKDTFVGPTLIAFSNEHPGAAARLFKEFAKANDKFEIKGAAFEGKIQDVEFLATLPTYEEAIARLMGTMKEAAAGKLARTFAALRDKLQEAA.

The protein belongs to the universal ribosomal protein uL10 family. Part of the ribosomal stalk of the 50S ribosomal subunit. The N-terminus interacts with L11 and the large rRNA to form the base of the stalk. The C-terminus forms an elongated spine to which L12 dimers bind in a sequential fashion forming a multimeric L10(L12)X complex.

In terms of biological role, forms part of the ribosomal stalk, playing a central role in the interaction of the ribosome with GTP-bound translation factors. This is Large ribosomal subunit protein uL10 from Haemophilus influenzae (strain PittEE).